Consider the following 205-residue polypeptide: Imidazole glycerol phosphate synthase subunit HisH (205 aa).

Residues 3–205 (KIGLIDYGMG…LLRRWIKSIQ (203 aa)) enclose the Glutamine amidotransferase type-1 domain. Cys81 serves as the catalytic Nucleophile. Active-site residues include His185 and Glu187.

As to quaternary structure, heterodimer of HisH and HisF.

It localises to the cytoplasm. It carries out the reaction 5-[(5-phospho-1-deoxy-D-ribulos-1-ylimino)methylamino]-1-(5-phospho-beta-D-ribosyl)imidazole-4-carboxamide + L-glutamine = D-erythro-1-(imidazol-4-yl)glycerol 3-phosphate + 5-amino-1-(5-phospho-beta-D-ribosyl)imidazole-4-carboxamide + L-glutamate + H(+). The enzyme catalyses L-glutamine + H2O = L-glutamate + NH4(+). It participates in amino-acid biosynthesis; L-histidine biosynthesis; L-histidine from 5-phospho-alpha-D-ribose 1-diphosphate: step 5/9. Its function is as follows. IGPS catalyzes the conversion of PRFAR and glutamine to IGP, AICAR and glutamate. The HisH subunit catalyzes the hydrolysis of glutamine to glutamate and ammonia as part of the synthesis of IGP and AICAR. The resulting ammonia molecule is channeled to the active site of HisF. The polypeptide is Imidazole glycerol phosphate synthase subunit HisH (Prochlorococcus marinus subsp. pastoris (strain CCMP1986 / NIES-2087 / MED4)).